The chain runs to 491 residues: Iota-carrageenase (491 aa).

Positions 1–19 (MKLQFKPVYLASIAIMAIG) are cleaved as a signal peptide. A disulfide bond links C422 and C490.

The protein belongs to the glycosyl hydrolase 82 family.

The protein resides in the secreted. The catalysed reaction is Endohydrolysis of 1,4-beta-D-linkages between D-galactose 4-sulfate and 3,6-anhydro-D-galactose-2-sulfate in iota-carrageenans.. In terms of biological role, hydrolyzes iota-carrageenans, sulfated 1,3-alpha-1,4-beta galactans from red algal cell walls, with an inversion of anomeric configuration. Also active against hybrid iota-/nu-carrageenan, not active against kappa- or lambda-carrageenans. The chain is Iota-carrageenase from Zobellia galactanivorans (strain DSM 12802 / CCUG 47099 / CIP 106680 / NCIMB 13871 / Dsij).